The sequence spans 359 residues: Insulin gene enhancer protein ISL-2 (359 aa).

LIM zinc-binding domains follow at residues Ala-25–Gly-86 and Ile-87–Arg-149. A disordered region spans residues Ala-151–Thr-191. Phosphoserine occurs at positions 154 and 157. A DNA-binding region (homeobox) is located at residues Thr-191 to Ser-250. The interval Gly-272–Trp-301 is LIM-binding domain (LID). Ser-279 carries the phosphoserine modification. Positions Glu-326–Ser-336 are enriched in low complexity. The interval Glu-326 to Thr-359 is disordered. Polar residues predominate over residues Asp-337 to Thr-359.

In terms of assembly, interacts with LHX4.

It is found in the nucleus. In terms of biological role, transcriptional factor that defines subclasses of motoneurons that segregate into columns in the spinal cord and select distinct axon pathways. This chain is Insulin gene enhancer protein ISL-2 (ISL2), found in Homo sapiens (Human).